A 404-amino-acid chain; its full sequence is Cytochrome b561 and DOMON domain-containing protein At2g04850 (404 aa).

The N-terminal stretch at 1 to 22 is a signal peptide; the sequence is MATLILSFLLLLLATKLPESLA. Positions 43-173 constitute a DOMON domain; it reads QQASIAWTYH…TKIHHVWNRG (131 aa). Positions 180-380 constitute a Cytochrome b561 domain; that stretch reads SPTIHPTTST…MEVNSWVVFC (201 aa). Residues 217-237 traverse the membrane as a helical segment; it reads VTHGVVNAISWGFLLPAGAVT. Heme b is bound by residues H219 and H255. A helical transmembrane segment spans residues 256–276; that stretch reads AAIQLTGFLLGTIGFSIGIVL. H288 provides a ligand contact to heme b. The chain crosses the membrane as a helical span at residues 290 to 310; the sequence is SLGIATFTAAALQTLALLFRP. H324 is a binding site for heme b. Helical transmembrane passes span 326-346 and 359-379; these read FVGY…FEVL and LCLS…WVVF.

Requires heme b as cofactor.

The protein resides in the membrane. Its function is as follows. May act as a catecholamine-responsive trans-membrane electron transporter. This chain is Cytochrome b561 and DOMON domain-containing protein At2g04850, found in Arabidopsis thaliana (Mouse-ear cress).